Consider the following 127-residue polypeptide: Protein KRTCAP2 homolog (127 aa).

A run of 4 helical transmembrane segments spans residues 13 to 33 (LISL…SNFF), 41 to 61 (ILGG…IGAI), 65 to 85 (VKLL…SSVH), and 87 to 107 (VSGT…NHAS).

Belongs to the KRTCAP2 family. Component of the oligosaccharyltransferase (OST) complex.

It is found in the membrane. In terms of biological role, subunit of the oligosaccharyl transferase (OST) complex that catalyzes the initial transfer of a defined glycan (Glc(3)Man(9)GlcNAc(2) in eukaryotes) from the lipid carrier dolichol-pyrophosphate to an asparagine residue within an Asn-X-Ser/Thr consensus motif in nascent polypeptide chains, the first step in protein N-glycosylation. N-glycosylation occurs cotranslationally and the complex associates with the Sec61 complex at the channel-forming translocon complex that mediates protein translocation across the endoplasmic reticulum (ER). All subunits are required for a maximal enzyme activity. This is Protein KRTCAP2 homolog from Dictyostelium discoideum (Social amoeba).